Here is a 417-residue protein sequence, read N- to C-terminus: Serine hydroxymethyltransferase (417 aa).

Residues leucine 121 and 125-127 (GHL) contribute to the (6S)-5,6,7,8-tetrahydrofolate site. Position 229 is an N6-(pyridoxal phosphate)lysine (lysine 229). (6S)-5,6,7,8-tetrahydrofolate is bound at residue 355–357 (SPF).

This sequence belongs to the SHMT family. As to quaternary structure, homodimer. It depends on pyridoxal 5'-phosphate as a cofactor.

It is found in the cytoplasm. It carries out the reaction (6R)-5,10-methylene-5,6,7,8-tetrahydrofolate + glycine + H2O = (6S)-5,6,7,8-tetrahydrofolate + L-serine. It functions in the pathway one-carbon metabolism; tetrahydrofolate interconversion. Its pathway is amino-acid biosynthesis; glycine biosynthesis; glycine from L-serine: step 1/1. Functionally, catalyzes the reversible interconversion of serine and glycine with tetrahydrofolate (THF) serving as the one-carbon carrier. This reaction serves as the major source of one-carbon groups required for the biosynthesis of purines, thymidylate, methionine, and other important biomolecules. Also exhibits THF-independent aldolase activity toward beta-hydroxyamino acids, producing glycine and aldehydes, via a retro-aldol mechanism. The sequence is that of Serine hydroxymethyltransferase from Xylella fastidiosa (strain M23).